The chain runs to 547 residues: Chaperonin GroEL (547 aa).

ATP-binding positions include 30–33 (TLGP), lysine 51, 87–91 (DGTTT), glycine 415, 479–481 (NAA), and aspartate 495.

This sequence belongs to the chaperonin (HSP60) family. Forms a cylinder of 14 subunits composed of two heptameric rings stacked back-to-back. Interacts with the co-chaperonin GroES.

The protein localises to the cytoplasm. It catalyses the reaction ATP + H2O + a folded polypeptide = ADP + phosphate + an unfolded polypeptide.. In terms of biological role, together with its co-chaperonin GroES, plays an essential role in assisting protein folding. The GroEL-GroES system forms a nano-cage that allows encapsulation of the non-native substrate proteins and provides a physical environment optimized to promote and accelerate protein folding. In Cupriavidus pinatubonensis (strain JMP 134 / LMG 1197) (Cupriavidus necator (strain JMP 134)), this protein is Chaperonin GroEL.